The primary structure comprises 130 residues: Early E3B 14.5 kDa protein (130 aa).

Residues 1–19 (MKRIVTFVLLIFCALPVLC) form the signal peptide. A helical transmembrane segment spans residues 53–77 (AWLYAIISVMVFCSTIFALAIYPYL).

Belongs to the adenoviridae E3_14 family. Phosphorylated on serine; O-glycosylated, but not N-glycosylated.

Its subcellular location is the host membrane. Its function is as follows. Down-regulates the EGF receptor and prevents cytolysis by TNF. The chain is Early E3B 14.5 kDa protein from Human adenovirus C serotype 6 (HAdV-6).